Consider the following 309-residue polypeptide: DNA-directed RNA polymerase subunit alpha (309 aa).

An alpha N-terminal domain (alpha-NTD) region spans residues 1–227 (MTFQVECVES…ALFEPLKNVS (227 aa)). The tract at residues 237–309 (EPTPESQTPI…GIKLQESKVS (73 aa)) is alpha C-terminal domain (alpha-CTD).

It belongs to the RNA polymerase alpha chain family. In terms of assembly, in cyanobacteria the RNAP catalytic core is composed of 2 alpha, 1 beta, 1 beta', 1 gamma and 1 omega subunit. When a sigma factor is associated with the core the holoenzyme is formed, which can initiate transcription.

It carries out the reaction RNA(n) + a ribonucleoside 5'-triphosphate = RNA(n+1) + diphosphate. Functionally, DNA-dependent RNA polymerase catalyzes the transcription of DNA into RNA using the four ribonucleoside triphosphates as substrates. The chain is DNA-directed RNA polymerase subunit alpha from Synechococcus elongatus (strain ATCC 33912 / PCC 7942 / FACHB-805) (Anacystis nidulans R2).